Here is a 106-residue protein sequence, read N- to C-terminus: Putative protein LRRC37A5P (106 aa).

This is Putative protein LRRC37A5P (LRRC37A5P) from Homo sapiens (Human).